Here is a 267-residue protein sequence, read N- to C-terminus: Type II pantothenate kinase (267 aa).

Asp-6 to Lys-13 provides a ligand contact to ATP. Catalysis depends on Glu-70, which acts as the Proton acceptor. ATP is bound by residues Thr-99, Gly-121–Gln-125, Tyr-137, and Ser-225.

Belongs to the type II pantothenate kinase family. In terms of assembly, homodimer.

The protein localises to the cytoplasm. The catalysed reaction is (R)-pantothenate + ATP = (R)-4'-phosphopantothenate + ADP + H(+). The protein operates within cofactor biosynthesis; coenzyme A biosynthesis; CoA from (R)-pantothenate: step 1/5. Its function is as follows. Catalyzes the phosphorylation of pantothenate (Pan), the first step in CoA biosynthesis. This Staphylococcus aureus (strain USA300) protein is Type II pantothenate kinase.